We begin with the raw amino-acid sequence, 346 residues long: Peroxidase 37 (346 aa).

Residues 1-22 form the signal peptide; the sequence is MHSSLIKLGFLLLLIQVSLSHA. Gln23 bears the Pyrrolidone carboxylic acid mark. Cystine bridges form between Cys33/Cys113, Cys66/Cys71, Cys119/Cys323, and Cys199/Cys231. The active-site Proton acceptor is His64. The Ca(2+) site is built by Asp65, Val68, Gly70, Asp72, and Ser74. Asn79 carries an N-linked (GlcNAc...) asparagine glycan. Residue Pro161 coordinates substrate. A heme b-binding site is contributed by His192. Thr193 contributes to the Ca(2+) binding site. Residues Asn208 and Asn236 are each glycosylated (N-linked (GlcNAc...) asparagine). Asp244, Thr247, and Asp252 together coordinate Ca(2+).

Belongs to the peroxidase family. Classical plant (class III) peroxidase subfamily. Requires heme b as cofactor. Ca(2+) is required as a cofactor.

Its subcellular location is the secreted. The protein resides in the vacuole. It carries out the reaction 2 a phenolic donor + H2O2 = 2 a phenolic radical donor + 2 H2O. Removal of H(2)O(2), oxidation of toxic reductants, biosynthesis and degradation of lignin, suberization, auxin catabolism, response to environmental stresses such as wounding, pathogen attack and oxidative stress. These functions might be dependent on each isozyme/isoform in each plant tissue. The protein is Peroxidase 37 (PER37) of Arabidopsis thaliana (Mouse-ear cress).